The primary structure comprises 355 residues: Chorismate synthase (355 aa).

Arg-46 contacts NADP(+). Residues 123–125 (RAS), 233–234 (NG), Gly-273, 288–292 (KPTPS), and Arg-314 each bind FMN.

It belongs to the chorismate synthase family. As to quaternary structure, homotetramer. It depends on FMNH2 as a cofactor.

It carries out the reaction 5-O-(1-carboxyvinyl)-3-phosphoshikimate = chorismate + phosphate. The protein operates within metabolic intermediate biosynthesis; chorismate biosynthesis; chorismate from D-erythrose 4-phosphate and phosphoenolpyruvate: step 7/7. Functionally, catalyzes the anti-1,4-elimination of the C-3 phosphate and the C-6 proR hydrogen from 5-enolpyruvylshikimate-3-phosphate (EPSP) to yield chorismate, which is the branch point compound that serves as the starting substrate for the three terminal pathways of aromatic amino acid biosynthesis. This reaction introduces a second double bond into the aromatic ring system. The polypeptide is Chorismate synthase (Campylobacter concisus (strain 13826)).